A 251-amino-acid polypeptide reads, in one-letter code: Imidazole glycerol phosphate synthase subunit HisF (251 aa).

Residues Asp-11 and Asp-130 contribute to the active site.

It belongs to the HisA/HisF family. In terms of assembly, heterodimer of HisH and HisF.

The protein localises to the cytoplasm. It carries out the reaction 5-[(5-phospho-1-deoxy-D-ribulos-1-ylimino)methylamino]-1-(5-phospho-beta-D-ribosyl)imidazole-4-carboxamide + L-glutamine = D-erythro-1-(imidazol-4-yl)glycerol 3-phosphate + 5-amino-1-(5-phospho-beta-D-ribosyl)imidazole-4-carboxamide + L-glutamate + H(+). It functions in the pathway amino-acid biosynthesis; L-histidine biosynthesis; L-histidine from 5-phospho-alpha-D-ribose 1-diphosphate: step 5/9. Functionally, IGPS catalyzes the conversion of PRFAR and glutamine to IGP, AICAR and glutamate. The HisF subunit catalyzes the cyclization activity that produces IGP and AICAR from PRFAR using the ammonia provided by the HisH subunit. This is Imidazole glycerol phosphate synthase subunit HisF from Chloroherpeton thalassium (strain ATCC 35110 / GB-78).